The following is a 426-amino-acid chain: Serine/threonine-protein kinase ssn3 (426 aa).

Positions 41 to 368 (YHIVGFISSG…AREALEHPYF (328 aa)) constitute a Protein kinase domain. ATP contacts are provided by residues 47-55 (ISSGTYGRV) and lysine 71. The active-site Proton acceptor is aspartate 173. Positions 390–426 (RVTQDDNDIRSGSLPGTKRSGLPDDSLMGRAAKRLKE) are disordered.

It belongs to the protein kinase superfamily. CMGC Ser/Thr protein kinase family. CDC2/CDKX subfamily. As to quaternary structure, component of the srb8-11 complex, a regulatory module of the Mediator complex. It depends on Mg(2+) as a cofactor.

The protein resides in the nucleus. The catalysed reaction is L-seryl-[protein] + ATP = O-phospho-L-seryl-[protein] + ADP + H(+). It carries out the reaction L-threonyl-[protein] + ATP = O-phospho-L-threonyl-[protein] + ADP + H(+). The enzyme catalyses [DNA-directed RNA polymerase] + ATP = phospho-[DNA-directed RNA polymerase] + ADP + H(+). Its function is as follows. Component of the srb8-11 complex. The srb8-11 complex is a regulatory module of the Mediator complex which is itself involved in regulation of basal and activated RNA polymerase II-dependent transcription. The srb8-11 complex may be involved in the transcriptional repression of a subset of genes regulated by Mediator. It may inhibit the association of the Mediator complex with RNA polymerase II to form the holoenzyme complex. The srb8-11 complex phosphorylates the C-terminal domain (CTD) of the largest subunit of RNA polymerase II. This chain is Serine/threonine-protein kinase ssn3 (ssn3), found in Aspergillus fumigatus (strain ATCC MYA-4609 / CBS 101355 / FGSC A1100 / Af293) (Neosartorya fumigata).